A 103-amino-acid polypeptide reads, in one-letter code: MAGARRRARCPASAGCAYSARPPPLSTRGRRISAGSGQPRWWPWGSPPPLDTRYRRPGPGRRARSCLHAGPRGRPPHSRTRARRTSPGAGGGGWRGGSCTSQR.

Residues 1–103 (MAGARRRARC…WRGGSCTSQR (103 aa)) form a disordered region. 2 stretches are compositionally biased toward basic residues: residues 55 to 65 (RRPGPGRRARS) and 74 to 84 (RPPHSRTRARR).

Belongs to the epstein-barr virus RPMS1 family.

This is an uncharacterized protein from Epstein-Barr virus (strain GD1) (HHV-4).